The chain runs to 145 residues: Glycine-rich protein (145 aa).

An N-terminal signal peptide occupies residues 1 to 19 (MKLTLAVVVVFAYIATTNA).

Component of the acid-insoluble and acid-soluble organic matrix of calcified layers of the shell (at protein level).

Its subcellular location is the secreted. This Lottia gigantea (Giant owl limpet) protein is Glycine-rich protein.